Consider the following 314-residue polypeptide: tRNA dimethylallyltransferase (314 aa).

An ATP-binding site is contributed by 12–19 (GPTASGKT). Residue 14 to 19 (TASGKT) coordinates substrate. Interaction with substrate tRNA stretches follow at residues 37–40 (DSAL) and 162–166 (QRIIR).

This sequence belongs to the IPP transferase family. As to quaternary structure, monomer. Requires Mg(2+) as cofactor.

The enzyme catalyses adenosine(37) in tRNA + dimethylallyl diphosphate = N(6)-dimethylallyladenosine(37) in tRNA + diphosphate. Its function is as follows. Catalyzes the transfer of a dimethylallyl group onto the adenine at position 37 in tRNAs that read codons beginning with uridine, leading to the formation of N6-(dimethylallyl)adenosine (i(6)A). The polypeptide is tRNA dimethylallyltransferase (Acinetobacter baumannii (strain AB0057)).